The following is a 329-amino-acid chain: GTPase Obg (329 aa).

An Obg domain is found at 1 to 159 (MQFIDQAIID…WSLQLELKLL (159 aa)). In terms of domain architecture, OBG-type G spans 160 to 328 (AEVGIIGLPN…LLSSIWYELG (169 aa)). ATP contacts are provided by residues 166-173 (GLPNAGKS), 191-195 (FTTLI), 213-216 (DIPG), 280-283 (NKKE), and 309-311 (SAV). Mg(2+) contacts are provided by serine 173 and threonine 193.

The protein belongs to the TRAFAC class OBG-HflX-like GTPase superfamily. OBG GTPase family. Monomer. Requires Mg(2+) as cofactor.

The protein localises to the cytoplasm. An essential GTPase which binds GTP, GDP and possibly (p)ppGpp with moderate affinity, with high nucleotide exchange rates and a fairly low GTP hydrolysis rate. Plays a role in control of the cell cycle, stress response, ribosome biogenesis and in those bacteria that undergo differentiation, in morphogenesis control. The chain is GTPase Obg from Prochlorococcus marinus (strain NATL1A).